A 339-amino-acid chain; its full sequence is Anthranilate phosphoribosyltransferase (339 aa).

Residues Gly-81, Gly-84–Asp-85, Thr-89, Asn-91–Thr-94, Lys-109–Ser-117, and Thr-121 each bind 5-phospho-alpha-D-ribose 1-diphosphate. Gly-81 provides a ligand contact to anthranilate. Ser-93 provides a ligand contact to Mg(2+). Anthranilate is bound at residue Asn-112. Arg-167 is an anthranilate binding site. Positions 226 and 227 each coordinate Mg(2+).

The protein belongs to the anthranilate phosphoribosyltransferase family. In terms of assembly, homodimer. Mg(2+) serves as cofactor.

It carries out the reaction N-(5-phospho-beta-D-ribosyl)anthranilate + diphosphate = 5-phospho-alpha-D-ribose 1-diphosphate + anthranilate. It participates in amino-acid biosynthesis; L-tryptophan biosynthesis; L-tryptophan from chorismate: step 2/5. In terms of biological role, catalyzes the transfer of the phosphoribosyl group of 5-phosphorylribose-1-pyrophosphate (PRPP) to anthranilate to yield N-(5'-phosphoribosyl)-anthranilate (PRA). In Ruegeria pomeroyi (strain ATCC 700808 / DSM 15171 / DSS-3) (Silicibacter pomeroyi), this protein is Anthranilate phosphoribosyltransferase.